Here is a 129-residue protein sequence, read N- to C-terminus: uncharacterized protein (129 aa).

Residues 1–28 are Cytoplasmic-facing; it reads MAGTLFIILRFVDTTLPSSRVYCVRSLE. Residues 29–49 traverse the membrane as a helical segment; sequence VSVAVELAAATVLAFESIGVV. Residues 50–54 are Extracellular-facing; that stretch reads DDCGR. A helical membrane pass occupies residues 55–75; it reads SVLFSIILIAAFICSVFLIAS. At 76–129 the chain is on the cytoplasmic side; it reads EDIAGSRRSTGSCVTLWEGRNISFCLYRSNWLNTVPVGYMFFLRKNRSLDERYF.

The protein localises to the membrane. This is an uncharacterized protein from Saccharomyces cerevisiae (strain ATCC 204508 / S288c) (Baker's yeast).